The sequence spans 221 residues: Putative 3-methyladenine DNA glycosylase (221 aa).

Belongs to the DNA glycosylase MPG family.

This is Putative 3-methyladenine DNA glycosylase from Herpetosiphon aurantiacus (strain ATCC 23779 / DSM 785 / 114-95).